We begin with the raw amino-acid sequence, 383 residues long: N-acetyldiaminopimelate deacetylase (383 aa).

The active site involves D75. E134 (proton acceptor) is an active-site residue.

Belongs to the peptidase M20A family. N-acetyldiaminopimelate deacetylase subfamily.

The catalysed reaction is N-acetyl-(2S,6S)-2,6-diaminopimelate + H2O = (2S,6S)-2,6-diaminopimelate + acetate. Its pathway is amino-acid biosynthesis; L-lysine biosynthesis via DAP pathway; LL-2,6-diaminopimelate from (S)-tetrahydrodipicolinate (acetylase route): step 3/3. Its function is as follows. Catalyzes the conversion of N-acetyl-diaminopimelate to diaminopimelate and acetate. This chain is N-acetyldiaminopimelate deacetylase, found in Lactobacillus acidophilus (strain ATCC 700396 / NCK56 / N2 / NCFM).